We begin with the raw amino-acid sequence, 304 residues long: tRNA-uridine aminocarboxypropyltransferase 1 (304 aa).

Disordered stretches follow at residues 1 to 29 (MALS…QTTS) and 165 to 193 (RNKA…HEST). Residues 180–193 (RTTDEEGWDLHEST) are compositionally biased toward basic and acidic residues. The DXTW signature appears at 206–209 (DSTW).

It belongs to the TDD superfamily. DTWD1 family.

The protein resides in the nucleus. It carries out the reaction a uridine in tRNA + S-adenosyl-L-methionine = a 3-[(3S)-3-amino-3-carboxypropyl]uridine in tRNA + S-methyl-5'-thioadenosine + H(+). In terms of biological role, catalyzes the formation of 3-(3-amino-3-carboxypropyl)uridine (acp3U) at position 20 in the D-loop of several cytoplasmic tRNAs (acp3U(20)). The chain is tRNA-uridine aminocarboxypropyltransferase 1 from Mus musculus (Mouse).